The sequence spans 157 residues: DNA gyrase inhibitor (157 aa).

The protein belongs to the DNA gyrase inhibitor family. In terms of assembly, interacts with DNA gyrase.

The protein resides in the cytoplasm. In terms of biological role, inhibits the supercoiling activity of DNA gyrase. Acts by inhibiting DNA gyrase at an early step, prior to (or at the step of) binding of DNA by the gyrase. It protects cells against toxins that target DNA gyrase, by inhibiting activity of these toxins and reducing the formation of lethal double-strand breaks in the cell. This is DNA gyrase inhibitor from Enterobacter lignolyticus (strain SCF1).